Consider the following 157-residue polypeptide: Small ribosomal subunit protein uS9 (157 aa).

It belongs to the universal ribosomal protein uS9 family.

This Caulobacter sp. (strain K31) protein is Small ribosomal subunit protein uS9.